The following is a 309-amino-acid chain: Probable RuBisCO transcriptional regulator (309 aa).

An HTH lysR-type domain is found at 5–62 (FTLQQLRILKAIATEKSFTRAAEVLFVSQPSLSKQIKTLESRLNISLLNRENNIVSLT). Positions 22–41 (FTRAAEVLFVSQPSLSKQIK) form a DNA-binding region, H-T-H motif.

Belongs to the LysR transcriptional regulatory family.

It localises to the plastid. The protein localises to the chloroplast. Its function is as follows. Trans-acting transcriptional regulator of RuBisCO genes (rbcL and rbcS) expression. This Trieres chinensis (Marine centric diatom) protein is Probable RuBisCO transcriptional regulator (rbcR).